We begin with the raw amino-acid sequence, 598 residues long: Elongation factor 4 (598 aa).

The region spanning Lys-4 to Glu-186 is the tr-type G domain. Residues Asp-16 to Thr-21 and Asn-133 to Asp-136 contribute to the GTP site.

This sequence belongs to the TRAFAC class translation factor GTPase superfamily. Classic translation factor GTPase family. LepA subfamily.

It is found in the cell inner membrane. The enzyme catalyses GTP + H2O = GDP + phosphate + H(+). Its function is as follows. Required for accurate and efficient protein synthesis under certain stress conditions. May act as a fidelity factor of the translation reaction, by catalyzing a one-codon backward translocation of tRNAs on improperly translocated ribosomes. Back-translocation proceeds from a post-translocation (POST) complex to a pre-translocation (PRE) complex, thus giving elongation factor G a second chance to translocate the tRNAs correctly. Binds to ribosomes in a GTP-dependent manner. The sequence is that of Elongation factor 4 from Pseudoalteromonas atlantica (strain T6c / ATCC BAA-1087).